Here is a 141-residue protein sequence, read N- to C-terminus: Cystatin (141 aa).

An N-terminal signal peptide occupies residues 1-26 (MVHSQLPVAAPLRLLCALLLLPSATM). A Cystatin domain is found at 29–129 (GGISPRSVTD…CHFQVWSRPW (101 aa)). The Secondary area of contact motif lies at 73-77 (QVVAG). 2 cysteine pairs are disulfide-bonded: C91–C107 and C120–C140.

The protein belongs to the cystatin family. As to expression, expressed by the venom gland at an extremely low level (at protein level).

Its subcellular location is the secreted. Its function is as follows. Inhibits various C1 cysteine proteases including cathepsin L, papain and cathepsin B. This protein has no toxic activity and its function in the venom is unknown. It may play a role as a housekeeping or regulatory protein. This is Cystatin from Oxyuranus microlepidotus (Inland taipan).